The following is a 205-amino-acid chain: GTP cyclohydrolase-2 (205 aa).

49–53 (RLHSE) contacts GTP. Residues C54, C65, and C67 each coordinate Zn(2+). GTP contacts are provided by residues Q70, 92 to 94 (EGR), and T114. D126 functions as the Proton acceptor in the catalytic mechanism. The Nucleophile role is filled by R128. Residues T149 and K154 each contribute to the GTP site.

The protein belongs to the GTP cyclohydrolase II family. Requires Zn(2+) as cofactor.

The enzyme catalyses GTP + 4 H2O = 2,5-diamino-6-hydroxy-4-(5-phosphoribosylamino)-pyrimidine + formate + 2 phosphate + 3 H(+). It functions in the pathway cofactor biosynthesis; riboflavin biosynthesis; 5-amino-6-(D-ribitylamino)uracil from GTP: step 1/4. In terms of biological role, catalyzes the conversion of GTP to 2,5-diamino-6-ribosylamino-4(3H)-pyrimidinone 5'-phosphate (DARP), formate and pyrophosphate. This Pseudomonas putida (strain W619) protein is GTP cyclohydrolase-2.